Reading from the N-terminus, the 793-residue chain is PC3-like endoprotease variant A (793 aa).

An N-terminal signal peptide occupies residues 1 to 29 (MNYRGIYRRRYVFVLLLLVAVVNISYGWT). Positions 30-152 (VLKNKDYKRR…QQKILERVKR (123 aa)) are excised as a propeptide. N-linked (GlcNAc...) asparagine glycosylation is found at asparagine 62 and asparagine 190. The 323-residue stretch at 164–486 (MWYLLNTGQA…FGRLDANAMV (323 aa)) folds into the Peptidase S8 domain. Active-site charge relay system residues include aspartate 202 and histidine 242. 2 disulfides stabilise this stretch: cysteine 259–cysteine 411 and cysteine 351–cysteine 381. Serine 419 acts as the Charge relay system in catalysis. The P/Homo B domain occupies 495–638 (LPAQRKCTAA…EERVIDTQTK (144 aa)). Cysteine 501 and cysteine 527 are oxidised to a cystine.

It belongs to the peptidase S8 family. Furin subfamily. Predominantly in the body column.

Functionally, probably involved in the processing of hormone and other protein precursors at sites comprised of pairs of basic amino acid residues. The chain is PC3-like endoprotease variant A from Hydra vulgaris (Hydra).